A 515-amino-acid chain; its full sequence is uncharacterized protein (515 aa).

Disordered stretches follow at residues 117–188 (DNIL…RKSQ), 362–453 (RSTS…AESM), and 496–515 (GNAV…DYFN). Basic and acidic residues-rich tracts occupy residues 370–380 (KNVESETKQEE), 388–402 (PAED…EVIE), and 428–438 (PIKEIEDKVEP). Positions 502–515 (ADTESMDDFMDYFN) are enriched in acidic residues.

This is an uncharacterized protein from Ostreid herpesvirus 1 (isolate France) (OsHV-1).